The sequence spans 280 residues: Nitrogenase iron protein (280 aa).

8–15 (GKGGIGKS) is a binding site for ATP. Cysteine 95 is a binding site for [4Fe-4S] cluster. The residue at position 98 (arginine 98) is an ADP-ribosylarginine; by dinitrogenase reductase ADP-ribosyltransferase. Cysteine 128 lines the [4Fe-4S] cluster pocket.

Belongs to the NifH/BchL/ChlL family. As to quaternary structure, homodimer. It depends on [4Fe-4S] cluster as a cofactor. Post-translationally, the reversible ADP-ribosylation of Arg-98 inactivates the nitrogenase reductase and regulates nitrogenase activity.

It carries out the reaction N2 + 8 reduced [2Fe-2S]-[ferredoxin] + 16 ATP + 16 H2O = H2 + 8 oxidized [2Fe-2S]-[ferredoxin] + 2 NH4(+) + 16 ADP + 16 phosphate + 6 H(+). Functionally, the key enzymatic reactions in nitrogen fixation are catalyzed by the nitrogenase complex, which has 2 components: the iron protein and the molybdenum-iron protein. The protein is Nitrogenase iron protein of Methanospirillum hungatei JF-1 (strain ATCC 27890 / DSM 864 / NBRC 100397 / JF-1).